The sequence spans 348 residues: NADH-ubiquinone oxidoreductase chain 2 (348 aa).

11 helical membrane passes run 3 to 23, 25 to 45, 67 to 87, 95 to 115, 118 to 138, 149 to 171, 178 to 198, 203 to 223, 240 to 260, 274 to 294, and 324 to 344; these read PVVLTIIISSLGLGTMMTFIG, HWLLVWMGLEINTLAIIPLMI, SALLLFASITNAWSLGEWSLL, ATLVTIALALKIGLAPMHFWL, VLQGLDLITGLILATWQKLAP, LNSNLLLFLGVSSTVIGGWGGLN, ILAYSSIAHLGWMITILHYSP, LNLALYIIMTLTTFLLFKLFN, LSIIALITLLSLGGLPPLSGF, DLAIPATIMALAALLSLFFYL, and LILMMATSLSILLLPLTPTIF.

Belongs to the complex I subunit 2 family.

The protein localises to the mitochondrion inner membrane. The catalysed reaction is a ubiquinone + NADH + 5 H(+)(in) = a ubiquinol + NAD(+) + 4 H(+)(out). Core subunit of the mitochondrial membrane respiratory chain NADH dehydrogenase (Complex I) that is believed to belong to the minimal assembly required for catalysis. Complex I functions in the transfer of electrons from NADH to the respiratory chain. The immediate electron acceptor for the enzyme is believed to be ubiquinone. The polypeptide is NADH-ubiquinone oxidoreductase chain 2 (MT-ND2) (Squalus acanthias (Spiny dogfish)).